Here is a 451-residue protein sequence, read N- to C-terminus: Subtilase-type proteinase psp3 (451 aa).

The N-terminal stretch at 1-20 is a signal peptide; it reads MRVSWISGLLLVAHLAPSSA. The region spanning 80 to 161 is the Inhibitor I9 domain; sequence YIVMFKPSVD…LVEPDRVMHV (82 aa). The 283-residue stretch at 169 to 451 folds into the Peptidase S8 domain; sequence PWGLARVSHR…PNVLAFNNYE (283 aa). Catalysis depends on charge relay system residues Asp205, His237, and Ser394.

The protein belongs to the peptidase S8 family.

The sequence is that of Subtilase-type proteinase psp3 (psp3) from Schizosaccharomyces pombe (strain 972 / ATCC 24843) (Fission yeast).